A 109-amino-acid chain; its full sequence is uncharacterized protein (109 aa).

Residues 87–106 form a helical membrane-spanning segment; that stretch reads WCSVGTAAAVGIFIGALLSM.

It belongs to the ElaB/YgaM/YqjD family. May bind to ribosomes.

It is found in the cell inner membrane. This is an uncharacterized protein from Escherichia coli O157:H7.